The following is a 356-amino-acid chain: UDP-N-acetylglucosamine--N-acetylmuramyl-(pentapeptide) pyrophosphoryl-undecaprenol N-acetylglucosamine transferase (356 aa).

UDP-N-acetyl-alpha-D-glucosamine contacts are provided by residues 14-16, asparagine 126, arginine 162, serine 190, isoleucine 244, and glutamine 289; that span reads TGG.

The protein belongs to the glycosyltransferase 28 family. MurG subfamily.

The protein resides in the cell inner membrane. The enzyme catalyses di-trans,octa-cis-undecaprenyl diphospho-N-acetyl-alpha-D-muramoyl-L-alanyl-D-glutamyl-meso-2,6-diaminopimeloyl-D-alanyl-D-alanine + UDP-N-acetyl-alpha-D-glucosamine = di-trans,octa-cis-undecaprenyl diphospho-[N-acetyl-alpha-D-glucosaminyl-(1-&gt;4)]-N-acetyl-alpha-D-muramoyl-L-alanyl-D-glutamyl-meso-2,6-diaminopimeloyl-D-alanyl-D-alanine + UDP + H(+). It participates in cell wall biogenesis; peptidoglycan biosynthesis. In terms of biological role, cell wall formation. Catalyzes the transfer of a GlcNAc subunit on undecaprenyl-pyrophosphoryl-MurNAc-pentapeptide (lipid intermediate I) to form undecaprenyl-pyrophosphoryl-MurNAc-(pentapeptide)GlcNAc (lipid intermediate II). The protein is UDP-N-acetylglucosamine--N-acetylmuramyl-(pentapeptide) pyrophosphoryl-undecaprenol N-acetylglucosamine transferase of Cupriavidus necator (strain ATCC 17699 / DSM 428 / KCTC 22496 / NCIMB 10442 / H16 / Stanier 337) (Ralstonia eutropha).